The following is a 189-amino-acid chain: MHFYRTNEFRVGLKIMLNGEPYAIIENEFVKPGKGQPFNRVRLRQLLSGKKIIEKIFKSGDAVEAADIIDRHLNYLYNNGEFWYFINNQNYELVAADAKAVGDYAKWLVKQTPCVLTLWKDQPIAVVPPNFVELEVLSTDPGIKGDAISSIYKPATLTTGVIVKVPLFINKGEIIKVDTRTSMYISRVK.

Lys34 is subject to N6-(3,6-diaminohexanoyl)-5-hydroxylysine.

The protein belongs to the elongation factor P family. May be beta-lysylated on the epsilon-amino group of Lys-34 by the combined action of EpmA and EpmB, and then hydroxylated on the C5 position of the same residue by EpmC (if this protein is present). Lysylation is critical for the stimulatory effect of EF-P on peptide-bond formation. The lysylation moiety may extend toward the peptidyltransferase center and stabilize the terminal 3-CCA end of the tRNA. Hydroxylation of the C5 position on Lys-34 may allow additional potential stabilizing hydrogen-bond interactions with the P-tRNA.

The protein resides in the cytoplasm. The protein operates within protein biosynthesis; polypeptide chain elongation. In terms of biological role, involved in peptide bond synthesis. Alleviates ribosome stalling that occurs when 3 or more consecutive Pro residues or the sequence PPG is present in a protein, possibly by augmenting the peptidyl transferase activity of the ribosome. Modification of Lys-34 is required for alleviation. The protein is Elongation factor P of Baumannia cicadellinicola subsp. Homalodisca coagulata.